A 213-amino-acid polypeptide reads, in one-letter code: V-type ATP synthase subunit D (213 aa).

This sequence belongs to the V-ATPase D subunit family.

Functionally, produces ATP from ADP in the presence of a proton gradient across the membrane. The polypeptide is V-type ATP synthase subunit D (Clostridium botulinum (strain Alaska E43 / Type E3)).